Here is a 145-residue protein sequence, read N- to C-terminus: Basic phospholipase A2 Vb-2 (145 aa).

The signal sequence occupies residues 1-19 (MNPAHLLVLLAVCVSLLGA). The propeptide occupies 20–27 (ANIPPQPL). 7 disulfides stabilise this stretch: cysteine 38–cysteine 97, cysteine 52–cysteine 144, cysteine 54–cysteine 70, cysteine 69–cysteine 125, cysteine 76–cysteine 118, cysteine 86–cysteine 111, and cysteine 104–cysteine 116. Ca(2+)-binding residues include tyrosine 53, glycine 55, and glycine 57. The active site involves histidine 73. A Ca(2+)-binding site is contributed by aspartate 74. Residue aspartate 119 is part of the active site.

It depends on Ca(2+) as a cofactor. Expressed by the venom gland.

The protein resides in the secreted. The enzyme catalyses a 1,2-diacyl-sn-glycero-3-phosphocholine + H2O = a 1-acyl-sn-glycero-3-phosphocholine + a fatty acid + H(+). Its function is as follows. Snake venom phospholipase A2 (PLA2) that has only a weak enzymatic activity. Inhibits neuromuscular transmission by blocking acetylcholine release from the nerve termini. PLA2 catalyzes the calcium-dependent hydrolysis of the 2-acyl groups in 3-sn-phosphoglycerides. The polypeptide is Basic phospholipase A2 Vb-2 (Bungarus fasciatus (Banded krait)).